A 297-amino-acid polypeptide reads, in one-letter code: UDP-N-acetylenolpyruvoylglucosamine reductase (297 aa).

An FAD-binding PCMH-type domain is found at 26 to 191 (QTGGPAEYLA…IAATFALKAG (166 aa)). Arg-170 is a catalytic residue. Residue Ser-220 is the Proton donor of the active site. Glu-290 is an active-site residue.

Belongs to the MurB family. FAD is required as a cofactor.

Its subcellular location is the cytoplasm. It catalyses the reaction UDP-N-acetyl-alpha-D-muramate + NADP(+) = UDP-N-acetyl-3-O-(1-carboxyvinyl)-alpha-D-glucosamine + NADPH + H(+). The protein operates within cell wall biogenesis; peptidoglycan biosynthesis. Its function is as follows. Cell wall formation. This Lactobacillus delbrueckii subsp. bulgaricus (strain ATCC 11842 / DSM 20081 / BCRC 10696 / JCM 1002 / NBRC 13953 / NCIMB 11778 / NCTC 12712 / WDCM 00102 / Lb 14) protein is UDP-N-acetylenolpyruvoylglucosamine reductase.